Consider the following 240-residue polypeptide: Transcriptional regulatory protein BaeR (240 aa).

Residues 12 to 125 (RILIVEDEPK…EVVARVKTIL (114 aa)) enclose the Response regulatory domain. Asp61 is modified (4-aspartylphosphate). Positions 131-234 (QRELQQQDAE…VYGVGYRWEA (104 aa)) form a DNA-binding region, ompR/PhoB-type.

Post-translationally, phosphorylated by BaeS.

It localises to the cytoplasm. Its function is as follows. Member of the two-component regulatory system BaeS/BaeR. Activates the mdtABCD operon. The protein is Transcriptional regulatory protein BaeR (baeR) of Escherichia coli O6:H1 (strain CFT073 / ATCC 700928 / UPEC).